We begin with the raw amino-acid sequence, 273 residues long: Undecaprenyl-diphosphatase (273 aa).

The next 7 membrane-spanning stretches (helical) occupy residues Phe-4–Ile-24, Lys-43–Tyr-63, Phe-83–Lys-103, Leu-109–Ala-129, Ala-184–Leu-204, Val-218–Leu-238, and Val-248–Met-268.

This sequence belongs to the UppP family.

The protein resides in the cell inner membrane. The enzyme catalyses di-trans,octa-cis-undecaprenyl diphosphate + H2O = di-trans,octa-cis-undecaprenyl phosphate + phosphate + H(+). Its function is as follows. Catalyzes the dephosphorylation of undecaprenyl diphosphate (UPP). Confers resistance to bacitracin. This is Undecaprenyl-diphosphatase from Nitrosospira multiformis (strain ATCC 25196 / NCIMB 11849 / C 71).